We begin with the raw amino-acid sequence, 238 residues long: tRNA (guanine-N(7)-)-methyltransferase (238 aa).

Positions 68, 93, 120, and 143 each coordinate S-adenosyl-L-methionine. The active site involves Asp143. Substrate is bound by residues Lys147, Asp179, and 216–219 (TKFE).

The protein belongs to the class I-like SAM-binding methyltransferase superfamily. TrmB family.

The catalysed reaction is guanosine(46) in tRNA + S-adenosyl-L-methionine = N(7)-methylguanosine(46) in tRNA + S-adenosyl-L-homocysteine. Its pathway is tRNA modification; N(7)-methylguanine-tRNA biosynthesis. Its function is as follows. Catalyzes the formation of N(7)-methylguanine at position 46 (m7G46) in tRNA. This is tRNA (guanine-N(7)-)-methyltransferase from Shewanella amazonensis (strain ATCC BAA-1098 / SB2B).